Consider the following 396-residue polypeptide: Probable sugar efflux transporter (396 aa).

Transmembrane regions (helical) follow at residues 15-35, 50-70, 81-101, 103-123, 136-156, 170-190, 209-229, 246-266, 275-295, 299-319, 333-353, and 364-384; these read VVTLAVAAFIFNTTEFVPVGL, VGIMLTIYAWVVALMSLPFML, LICLFVVFIASHVLSFLSWSF, VLVISRIGVAFAHAIFWSITA, AQALSLIATGTALAMVLGLPL, FFAIGIGALITLLCLIKLLPL, PALMSIYLLTVVVVTAHYTAY, FATALLLLLGGAGIIGSVIFG, ALVSTAIALLLVCLALLLPAA, IHLGVLSIFWGIAMMIIGLGM, VAMALFSGIFNIGIGAGALVG, and MIGYVGAVPAFAALIWSIIIF.

It belongs to the major facilitator superfamily. SotB (TC 2.A.1.2) family.

Its subcellular location is the cell inner membrane. Involved in the efflux of sugars. The physiological role may be the reduction of the intracellular concentration of toxic sugars or sugar metabolites. This chain is Probable sugar efflux transporter, found in Escherichia coli O139:H28 (strain E24377A / ETEC).